Consider the following 307-residue polypeptide: Ribosomal RNA small subunit methyltransferase H (307 aa).

S-adenosyl-L-methionine-binding positions include 34–36 (GGH), aspartate 54, phenylalanine 79, aspartate 101, and glutamine 108.

The protein belongs to the methyltransferase superfamily. RsmH family.

It localises to the cytoplasm. It catalyses the reaction cytidine(1402) in 16S rRNA + S-adenosyl-L-methionine = N(4)-methylcytidine(1402) in 16S rRNA + S-adenosyl-L-homocysteine + H(+). In terms of biological role, specifically methylates the N4 position of cytidine in position 1402 (C1402) of 16S rRNA. This Ruthia magnifica subsp. Calyptogena magnifica protein is Ribosomal RNA small subunit methyltransferase H.